Consider the following 84-residue polypeptide: Toxin Tf2 (84 aa).

The N-terminal stretch at 1–20 is a signal peptide; the sequence is MKRFLLFISILMMIGTIVVG. Positions 21–83 constitute an LCN-type CS-alpha/beta domain; that stretch reads KEGYAMDHEG…VWDYATNKCG (63 aa). 4 disulfide bridges follow: Cys31-Cys82, Cys35-Cys58, Cys43-Cys63, and Cys47-Cys65. At Cys82 the chain carries Cysteine amide.

It belongs to the long (4 C-C) scorpion toxin superfamily. Sodium channel inhibitor family. Beta subfamily. Contains 4 disulfide bonds. As to expression, expressed by the venom gland.

The protein resides in the secreted. In terms of biological role, beta toxins bind voltage-independently at site-4 of sodium channels (Nav) and shift the voltage of activation toward more negative potentials thereby affecting sodium channel activation and promoting spontaneous and repetitive firing. This toxin is active against hNav1.3/SCN3A. The sequence is that of Toxin Tf2 from Tityus fasciolatus (Central Brazilian scorpion).